We begin with the raw amino-acid sequence, 136 residues long: UPF0225 protein Pnap_0466 (136 aa).

It belongs to the UPF0225 family.

The polypeptide is UPF0225 protein Pnap_0466 (Polaromonas naphthalenivorans (strain CJ2)).